A 353-amino-acid chain; its full sequence is O-antigen biosynthesis glycosyltransferase WclY (353 aa).

A helical membrane pass occupies residues 116–136 (SLIGGLLWCSIWLFFDKLVIL). Residues N190 and E271 each coordinate UDP. An E(x7)E motif is present at residues 263-271 (EGFGLTVLE).

Belongs to the glycosyltransferase group 1 family. Glycosyltransferase 4 subfamily.

It is found in the membrane. The protein operates within bacterial outer membrane biogenesis; LPS O-antigen biosynthesis. Activated by 5mM MnCl(2) and MgCl(2). No significant effect on activity by 5 mM ethylenediaminetetraacetic acid (EDTA), 0.125-0.5% Triton X-100 or dithiothreitol (DTT). Inhibited by 5 mM Zn-acetate. Its function is as follows. Involved in the assembly of the O-repeating unit during O-antigen biosynthesis. Glucosyltransferase accountable for the alpha-D-Glc-1,4-beta-D-Gal linkage within the O-antigen. Transfers alpha-1,4-Glc to the Gal moiety of a specific Gal-beta1-3GalNAc-alpha-OPO3-PO3-phenoxyundecyl (Gal-beta1-3GalNAc-PP-PhU) synthetic natural acceptor substrate analog. Requires both Gal-beta1-3GalNAc-alpha and the diphosphate moiety in the acceptor. Not active with GalNAc-PP-PhU, GlcNAc-PP-PhU, Gal-beta1-3GalNAc-alpha-O-benzyl, D-Rha-alpha1-3GlcNAc-alpha-PP-PhU or D-Man-alpha1-3Man-alpha-5-benzamidopentyl (BAP), nor with glycopeptides TTTVTP (Gal-beta1-3GalNAc-alpha-)TPTG or TT (Gal-beta1-3GalNAc-alpha-)TVTPTPTG as acceptor substrates. Has a broad nucleotide sugar donor substrate specificity with ADP-Glc, TDP-Glc and UDP-Glc as superior donors. Gal, GlcNAc, and GalNAc residues are transferred from UDP-sugars, but with low activity. UDP-Xyl, UDP-GlcA, GDP-Fuc or GDP-K-Rha do not act as donors. This Escherichia coli protein is O-antigen biosynthesis glycosyltransferase WclY.